Here is a 207-residue protein sequence, read N- to C-terminus: Vexin (207 aa).

The disordered stretch occupies residues 56–100 (ELLPHRGDRRDPGDRRRFGRLQTARPPTAHPAKASARPVGISEPK). Residues 58 to 71 (LPHRGDRRDPGDRR) show a composition bias toward basic and acidic residues.

Belongs to the vexin family.

Its subcellular location is the cell membrane. It localises to the nucleus. In terms of biological role, required for neurogenesis in the neural plate and retina. Strongly cooperates with neural bHLH factors to promote neurogenesis. The protein is Vexin of Homo sapiens (Human).